The sequence spans 414 residues: Protein IQ-DOMAIN 8 (414 aa).

The Nuclear localization signal 1 motif lies at 14–21 (NKKNITDD). The segment at 40–61 (LISSSKGFKSRGGSYGTPSLGS) is disordered. IQ domains are found at residues 92–120 (REWAATRIQAAFRAFLARQALRALKAVVR), 121–143 (IQAIFRGRQVRKQADVTLRCMQA), and 144–169 (LVRVQARVRAHCNRGPSDGQELEKPS). Residues 119 to 132 (VRIQAIFRGRQVRK) are calmodulin-binding. Disordered stretches follow at residues 156–190 (NRGPSDGQELEKPSDQQKDDPAKQAEKGWCDSPGS), 218–244 (HQPRTCPSPAKASKQGSVKKNNGSCKS), and 262–329 (GRLM…SGSF). The segment covering 164-184 (ELEKPSDQQKDDPAKQAEKGW) has biased composition (basic and acidic residues). Residues 231–244 (KQGSVKKNNGSCKS) show a composition bias toward polar residues. Residues 274–289 (NARKSESSVSEHDTVQ) show a composition bias toward basic and acidic residues. Over residues 307-328 (SSSATSSESSSTSQSPVPFSGS) the composition is skewed to low complexity. Positions 336–343 (YRKPSYMS) match the Nuclear localization signal 2 motif. Positions 347–398 (SIKAKQRRSGSSSSCSKTPFEKKQSMSYNGDVNVRRSAGSDPLNNQWTDLYP) are disordered.

This sequence belongs to the IQD family. In terms of assembly, binds to multiple calmodulin (CaM) in the presence of Ca(2+) and CaM-like proteins.

It is found in the nucleus. It localises to the cytoplasm. The protein resides in the cytoskeleton. Its subcellular location is the nucleus envelope. May be involved in cooperative interactions with calmodulins or calmodulin-like proteins. Recruits calmodulin proteins to microtubules, thus being a potential scaffold in cellular signaling and trafficking. May associate with nucleic acids and regulate gene expression at the transcriptional or post-transcriptional level. This chain is Protein IQ-DOMAIN 8, found in Arabidopsis thaliana (Mouse-ear cress).